Reading from the N-terminus, the 1257-residue chain is MMCEVMPTINEDTPMSQRGSQSSGSDSDSHFEQLMVNMLDERDRLLDTLRETQESLSLAQQRLQDVIYDRDSLQRQLNSALPQDIESLTGGLTGSKGADPPEFAALTKELNACREQLLEKEEEISELKAERNNTRLLLEHLECLVSRHERSLRMTVVKRQAQSPSGVSSEVEVLKALKSLFEHHKALDEKVRERLRVSLERVSALEEELAAANQEIVALREQNVHIQRKMVSSEGSTESEHLEGMEAGQKVHEKRLSNGSIDSTDDTSQIVELQELLEKQNYEMAQMKERLTALSSRVGEVEQEAETARKDLIKTEEMNTKYQRDIREAMAQKEDMEERITTLEKRYLSAQRESTSIHDMNDKLENELANKEAILRQMEEKNRQLQERLELAEQKLQQTMRKAETLPEVEAELAQRIAALTKAEERHGNIEERMRHLEGQLEEKNQELQRARQREKMNEEHNKRLSDTVDRLLTESNERLQLHLKERMAALEEKNVLIQESENFRKNLEESLHDKVSLAEEIEKLRSELDQMKMRTGSLIEPTISRTHIDTSTELRYSVGSLVDSQSDYRTTKVIRRPRRGRMGVRRDEPKVKSLGDHEWNRTQQIGVLGSHPFESDTEMSDIDDDDRETIFSSMDLLSPSGHSDAQTLAMMLQEQLDAINKEIRLIQEEKESTELRAEEIENRVASVSLEGLNLARVHPGTSITASVTASSLASSSPPSGHSTPKLTPRSPAREMDRMGVMTLPSDLRKHRRKIAVVEEDGREDKATIKCETSPPPTPRAVRMTHTLPSSYHNDARSSLSASLEPDSLGLGSANSSQDSLHKAPKKKGIKSSIGRLFGKKEKARLGQLRGFMETEAAAQESLGLGKLGTQAEKDRRLKKKHELLEEARRKGLPFAQWDGPTVVAWLELWLGMPAWYVAACRANVKSGAIMSALSDTEIQREIGISNPLHRLKLRLAIQEMVSLTSPSAPPTSRTPSGNVWVTHEEMENLTAPAKTKESEEGSWAQCPVFLQTLAYGDMNHEWIGNEWLPSLGLPQYRSYFMECLVDARMLDHLTKKDLRVHLKMVDSFHRTSLQYGIMCLKRLNYDRKELERRREASQHEIKDVLVWSNDRVIRWIQAIGLREYANNILESGVHGSLIALDENFDYSSLALLLQIPTQNTQARQILEREYNNLLALGTERRLDESDDKNFRRGSTWRRQFPPREVHGISMMPGSSETLPAGFRLTTTSGQSRKMTTDVASSRLQRLDNSTVRTYSC.

Positions 1–29 are disordered; that stretch reads MMCEVMPTINEDTPMSQRGSQSSGSDSDS. The segment covering 16 to 26 has biased composition (low complexity); the sequence is SQRGSQSSGSD. 2 coiled-coil regions span residues 29–154 and 185–235; these read SHFE…SLRM and KALD…SSEG. S236 is subject to Phosphoserine. T237 is subject to Phosphothreonine. The residue at position 239 (S239) is a Phosphoserine. Coiled coils occupy residues 264-541 and 643-695; these read TDDT…SLIE and HSDA…GLNL. The segment at 439–463 is disordered; sequence GQLEEKNQELQRARQREKMNEEHNK. 2 positions are modified to phosphoserine: S687 and S689. Low complexity predominate over residues 709-725; that stretch reads TASSLASSSPPSGHSTP. 2 disordered regions span residues 709–738 and 759–834; these read TASS…EMDR and EEDG…KSSI. Polar residues predominate over residues 787 to 802; sequence TLPSSYHNDARSSLSA. A phosphoserine mark is found at S817 and S820. SAM domains follow at residues 898–964, 1020–1084, and 1108–1177; these read WDGP…MVSL, NHEW…LKRL, and WSND…LLAL. Residues 1081-1107 are a coiled coil; it reads LKRLNYDRKELERRREASQHEIKDVLV.

This sequence belongs to the liprin family. Liprin-alpha subfamily. As to quaternary structure, forms homodimers and heterodimers with liprins-alpha and liprins-beta. Interacts with the second PTPase domain of PTPRD, PTPRF and PTPRS. Interacts with KIF1A; the interaction decreases in presence of calcium.

It is found in the cytoplasm. The protein localises to the cell surface. It localises to the cell projection. The protein resides in the dendritic spine. In terms of biological role, alters PTPRF cellular localization and induces PTPRF clustering. May regulate the disassembly of focal adhesions. May localize receptor-like tyrosine phosphatases type 2A at specific sites on the plasma membrane, possibly regulating their interaction with the extracellular environment and their association with substrates. In neuronal cells, is a scaffolding protein in the dendritic spines which acts as immobile postsynaptic post able to recruit KIF1A-driven dense core vesicles to dendritic spines. The polypeptide is Liprin-alpha-2 (Ppfia2) (Mus musculus (Mouse)).